We begin with the raw amino-acid sequence, 197 residues long: Pyridoxal 5'-phosphate synthase subunit PdxT (197 aa).

50–52 (GES) provides a ligand contact to L-glutamine. Residue Cys82 is the Nucleophile of the active site. Residues Arg111 and 140-141 (IR) contribute to the L-glutamine site. Residues His176 and Glu178 each act as charge relay system in the active site.

The protein belongs to the glutaminase PdxT/SNO family. In terms of assembly, in the presence of PdxS, forms a dodecamer of heterodimers. Only shows activity in the heterodimer.

The enzyme catalyses aldehydo-D-ribose 5-phosphate + D-glyceraldehyde 3-phosphate + L-glutamine = pyridoxal 5'-phosphate + L-glutamate + phosphate + 3 H2O + H(+). It carries out the reaction L-glutamine + H2O = L-glutamate + NH4(+). Its pathway is cofactor biosynthesis; pyridoxal 5'-phosphate biosynthesis. In terms of biological role, catalyzes the hydrolysis of glutamine to glutamate and ammonia as part of the biosynthesis of pyridoxal 5'-phosphate. The resulting ammonia molecule is channeled to the active site of PdxS. The chain is Pyridoxal 5'-phosphate synthase subunit PdxT from Streptomyces griseus subsp. griseus (strain JCM 4626 / CBS 651.72 / NBRC 13350 / KCC S-0626 / ISP 5235).